The following is a 350-amino-acid chain: Small ribosomal subunit biogenesis GTPase RsgA (350 aa).

Polar residues predominate over residues 1 to 17 (MSKNKLSKGQQRRVNAN). Residues 1-33 (MSKNKLSKGQQRRVNANHQRRLKTSKEKPDYDD) are disordered. One can recognise a CP-type G domain in the interval 104–273 (TSVLTRPDFY…VIDSPGVREF (170 aa)). GTP-binding positions include 160-163 (NKID) and 214-222 (GQSGVGKSS). Positions 297, 302, 304, and 310 each coordinate Zn(2+).

Belongs to the TRAFAC class YlqF/YawG GTPase family. RsgA subfamily. In terms of assembly, monomer. Associates with 30S ribosomal subunit, binds 16S rRNA. Zn(2+) serves as cofactor.

Its subcellular location is the cytoplasm. One of several proteins that assist in the late maturation steps of the functional core of the 30S ribosomal subunit. Helps release RbfA from mature subunits. May play a role in the assembly of ribosomal proteins into the subunit. Circularly permuted GTPase that catalyzes slow GTP hydrolysis, GTPase activity is stimulated by the 30S ribosomal subunit. In Shigella flexneri, this protein is Small ribosomal subunit biogenesis GTPase RsgA.